The sequence spans 260 residues: MPNLLEKTRKITSILQRSVDSLETELPYNTMASRLADIIDCNACIINGGGSLLGYAMKYKTNTDRVEEFFETRQFPDAYVKAASRVYDTEANLSVENELTIFPIESKDIYPDGLTTIAPIYGGGMRLGTLIIWRNDNEFSDDDLVLVEISSTVVGIQLLNLQTENLEETIRKQTVVNMAINTLSYSEMKAVAAILSELDGNEGRLTASVIADRIGITRSVIVNALRKLESAGIIESRSLGMKGTYLKVINEGIFDKLKEF.

Residues 1–159 (MPNLLEKTRK…SSTVVGIQLL (159 aa)) form a GAF domain region. A DNA-binding region (H-T-H motif) is located at residues 207 to 226 (ASVIADRIGITRSVIVNALR).

It belongs to the CodY family.

Its subcellular location is the cytoplasm. Functionally, DNA-binding global transcriptional regulator which is involved in the adaptive response to starvation and acts by directly or indirectly controlling the expression of numerous genes in response to nutrient availability. During rapid exponential growth, CodY is highly active and represses genes whose products allow adaptation to nutrient depletion. The sequence is that of Global transcriptional regulator CodY from Streptococcus equi subsp. equi (strain 4047).